The chain runs to 70 residues: Homeobox protein OTX2 (70 aa).

Residues 34–70 (HQLPGPGATLSPMGTNAVTSHLNQSPASLSTQGYGAS) are disordered. Polar residues predominate over residues 45 to 70 (PMGTNAVTSHLNQSPASLSTQGYGAS).

Belongs to the paired homeobox family. Bicoid subfamily.

Its subcellular location is the nucleus. In terms of biological role, transcription factor probably involved in the development of the brain and the sense organs. Can bind to the bicoid/BCD target sequence (BTS): 5'-TCTAATCCC-3'. This chain is Homeobox protein OTX2 (Otx2), found in Rattus norvegicus (Rat).